Reading from the N-terminus, the 637-residue chain is MTIRRLDPVLIDRIAAGEVIERPAAAVKELVENALDAQASEIDVVLEGGGKTLIRVTDNGCGMSAEDLELSVERHATSKLPDGDLFAIATLGFRGEALPSIGSVSVLSLTSRMETATHGVALSVEHGRKQTVIPCGQPRGTRIEVRELFRTTPARLKFLKGDRAEARAAADAVQRLAMAHPTRRFTFTSTDTAGFDYLPCAEGPEGLLARIGAVLGKDFEANALPVEAEREGIILEGFIGLPTWHRANGLAQYLFVNGRPVRDKLLTGAVRAAYMDYLPAGRYPALALFLRCDPQEVDVNVHPAKAEVRFRDQGLVRGLLVGALKQTLQQAMHRATPDGGRVALGLLAMHSAGQGQRPVSSASMPSASRQAPTMPPRDWIKEGVQDWDWRQSPARPQNPPQNPPPGDRIEMSGSLPLGFAETPAGLNGDSGKELSEAASETPHDEPLGFARAQLHETYIVAQTRDGFVLVDQHAAHERLVYERLKQARAAQTVERQILLLPTIVELPEADVERLVDAASMLADFGLVVESFGPGALAVREIPIVLKDGSVPALIHDLANQLQEDDKALIPLERKLDHVLATFACHHSVRAGRRLGIEEMNALLREMERTPGSGQCNHGRPTYIELKLGDIERLFGRG.

Positions 353 to 371 are enriched in polar residues; that stretch reads GQGQRPVSSASMPSASRQA. The disordered stretch occupies residues 353 to 444; sequence GQGQRPVSSA…SEAASETPHD (92 aa). Positions 378–389 are enriched in basic and acidic residues; it reads DWIKEGVQDWDW. A compositionally biased stretch (pro residues) spans 396–406; that stretch reads PQNPPQNPPPG. The segment covering 430-444 has biased composition (basic and acidic residues); it reads SGKELSEAASETPHD.

It belongs to the DNA mismatch repair MutL/HexB family.

Its function is as follows. This protein is involved in the repair of mismatches in DNA. It is required for dam-dependent methyl-directed DNA mismatch repair. May act as a 'molecular matchmaker', a protein that promotes the formation of a stable complex between two or more DNA-binding proteins in an ATP-dependent manner without itself being part of a final effector complex. This chain is DNA mismatch repair protein MutL, found in Beijerinckia indica subsp. indica (strain ATCC 9039 / DSM 1715 / NCIMB 8712).